We begin with the raw amino-acid sequence, 85 residues long: Putative membrane protein insertion efficiency factor (85 aa).

Belongs to the UPF0161 family.

Its subcellular location is the cell membrane. Its function is as follows. Could be involved in insertion of integral membrane proteins into the membrane. The polypeptide is Putative membrane protein insertion efficiency factor (Buchnera aphidicola subsp. Schizaphis graminum (strain Sg)).